The sequence spans 48 residues: Palustrin-3b (48 aa).

Residues C43 and C48 are joined by a disulfide bond.

As to expression, expressed by the skin glands.

Its subcellular location is the secreted. Antimicrobial activity against Gram-negative bacterium E.coli. The polypeptide is Palustrin-3b (Lithobates palustris (Pickerel frog)).